The following is a 991-amino-acid chain: MTSKESKPSRTTWRGMEPPLRETWNQVLQELVKRQQQEEEEQQGLVSGKKKSWVSIDLLGTEGKDIKKVNIWEPCEKWFAQVVWGVLWVLQIVLWGCLMWEMRKGNQCQAEEVIALVSDPGGFQRVQHVETVPVTCVTKNFTQWGCQPEGAYPDPELEYRNISREILEEVYKQDWPWNTYHWPLWQMENMRQWMKENEKEYKERTNKTKEDIDDLVAGRIRGRFCVPYPYALLRCEEWCWYPESINQETGHAEKIKINCTKAKAVSCTEKMPLAAVQRVYWEKEDEESMKFLNIKACNISLRCQDEEKSPGGCVQGYPIPKGAEIIPEAMKYLRGKKSRYGGIKDKNGELKLPLSVRVWVRMANLSGWVNGTPPYWNARINGSTGINGTRWYGVGTLHHLGYNISSNPERGICDFTGELWIGGDKFPYYYKPSWNCSQNWTGHPVWQVFRYLDMTEHMTSRCIQRPERHNITVGNGTITGNCSVTNWDGCNCTRSGNHLYNSTSGGLLVIICRQNSTITGIMGTNTNWTTMWNIYQNCSKCNNSSLDRTGKGTLGTVNDLKCSLPHRNESNKWTCAARTGRKGSQRDSLYIAGRDFWGRVKAKYSCESNLGGLDSMMHQQMLLQRYQVIRVRAYTYGVVEMPQSYMEAQGKNRRSRRNLQRKKRGIGLVIVLAIMAIIAAAGAGLGVANAVQQSYTRTAVQSLANATAAQQEVLEASYAMVQHIAKGIRILEARVARVEALVDRMMVYHELDCWHYQHYCVTSTRSEVANYVNWTRFKDNCTWQQWEEEIEQHEGNLSLLLREAALQVHIAQRDARRIPDAWKAIQEAFNWSSWFSWLKYVPWIIMGIVGLICFRILMCVISMCLQAYKQVKQIRYTQVTVVIEAPVELEEKQKRNGDGTNGCASLEHERRTSHRSFIQIWRATWWAWKTSPWRHNWRTMPYITLLPILVIWQWMEENGWNGENQHKKKKERVDCQDREQMPTLENDYVEL.

The signal sequence occupies residues 1–106 (MTSKESKPSR…CLMWEMRKGN (106 aa)). Topologically, residues 107-840 (QCQAEEVIAL…WSSWFSWLKY (734 aa)) are extracellular. N-linked (GlcNAc...) asparagine; by host glycosylation is found at N140, N161, N206, N258, N298, N364, N381, N387, N403, N435, N439, N470, N475, N481, N491, N501, N515, N527, N537, N542, N543, and N568. The fusion peptide stretch occupies residues 665–685 (GIGLVIVLAIMAIIAAAGAGL). The stretch at 697-747 (RTAVQSLANATAAQQEVLEASYAMVQHIAKGIRILEARVARVEALVDRMMV) forms a coiled coil. Residue N705 is glycosylated (N-linked (GlcNAc...) asparagine; by host). The immunosuppression stretch occupies residues 731–747 (LEARVARVEALVDRMMV). Residues N773, N780, N796, and N830 are each glycosylated (N-linked (GlcNAc...) asparagine; by host). A coiled-coil region spans residues 788–823 (EEIEQHEGNLSLLLREAALQVHIAQRDARRIPDAWK). A helical membrane pass occupies residues 841–861 (VPWIIMGIVGLICFRILMCVI). Topologically, residues 862 to 991 (SMCLQAYKQV…PTLENDYVEL (130 aa)) are cytoplasmic. C864 carries S-palmitoyl cysteine; by host lipidation.

The mature envelope protein (Env) consists of a trimer of SU-TM heterodimers attached by noncovalent interactions or by a labile interchain disulfide bond. Specific enzymatic cleavages in vivo yield mature proteins. Envelope glycoproteins are synthesized as an inactive precursor that is N-glycosylated and processed likely by host cell furin or by a furin-like protease in the Golgi to yield the mature SU and TM proteins. The cleavage site between SU and TM requires the minimal sequence [KR]-X-[KR]-R. Post-translationally, the transmembrane protein is palmitoylated.

The protein localises to the virion membrane. The protein resides in the host cell membrane. In terms of biological role, the surface protein (SU) attaches the virus to the host cell by binding to its receptor. This interaction triggers the refolding of the transmembrane protein (TM) and is thought to activate its fusogenic potential by unmasking its fusion peptide. Fusion occurs at the host cell plasma membrane. The transmembrane protein (TM) acts as a class I viral fusion protein. Under the current model, the protein has at least 3 conformational states: pre-fusion native state, pre-hairpin intermediate state, and post-fusion hairpin state. During viral and target cell membrane fusion, the coiled coil regions (heptad repeats) assume a trimer-of-hairpins structure, positioning the fusion peptide in close proximity to the C-terminal region of the ectodomain. The formation of this structure appears to drive apposition and subsequent fusion of viral and target cell membranes. Membranes fusion leads to delivery of the nucleocapsid into the cytoplasm. The sequence is that of Envelope glycoprotein gp160 (env) from Ovis aries (Sheep).